A 266-amino-acid polypeptide reads, in one-letter code: Nuclease (266 aa).

The signal sequence occupies residues 1-21 (MRFNNKMLALAALLFAAQASA). A disulfide bond links Cys30 and Cys34. His110 acts as the Proton acceptor in catalysis. Asn140 serves as a coordination point for Mg(2+). A disulfide bond links Cys222 and Cys264.

Belongs to the DNA/RNA non-specific endonuclease family. In terms of assembly, homodimer. Mg(2+) serves as cofactor.

Its subcellular location is the secreted. The enzyme catalyses Endonucleolytic cleavage to 5'-phosphomononucleotide and 5'-phosphooligonucleotide end-products.. Functionally, catalyzes the hydrolysis of both DNA and RNA, double- or single-stranded, at the 3'position of the phosphodiester bond to produce 5'-phosphorylated mono-, di-, tri- and tetranucleotides. DNA is a slightly better substrate than RNA. The sequence is that of Nuclease (nucA) from Serratia marcescens.